Here is a 201-residue protein sequence, read N- to C-terminus: Small ribosomal subunit protein uS4c (201 aa).

Residues 20–44 (GLTSKRPRAGSDLRNQSRSGKKSQY) are disordered. Positions 89 to 152 (MRLDNILFRL…NSRTLVQNLL (64 aa)) constitute an S4 RNA-binding domain.

The protein belongs to the universal ribosomal protein uS4 family. Part of the 30S ribosomal subunit. Contacts protein S5. The interaction surface between S4 and S5 is involved in control of translational fidelity.

It localises to the plastid. The protein resides in the chloroplast. In terms of biological role, one of the primary rRNA binding proteins, it binds directly to 16S rRNA where it nucleates assembly of the body of the 30S subunit. Functionally, with S5 and S12 plays an important role in translational accuracy. The chain is Small ribosomal subunit protein uS4c (rps4) from Aethionema cordifolium (Lebanon stonecress).